Consider the following 188-residue polypeptide: Acireductone dioxygenase (188 aa).

Fe(2+) is bound by residues H97, H99, E103, and H141. Positions 97, 99, 103, and 141 each coordinate Ni(2+).

This sequence belongs to the acireductone dioxygenase (ARD) family. In terms of assembly, monomer. The cofactor is Fe(2+). It depends on Ni(2+) as a cofactor.

It carries out the reaction 1,2-dihydroxy-5-(methylsulfanyl)pent-1-en-3-one + O2 = 3-(methylsulfanyl)propanoate + CO + formate + 2 H(+). The enzyme catalyses 1,2-dihydroxy-5-(methylsulfanyl)pent-1-en-3-one + O2 = 4-methylsulfanyl-2-oxobutanoate + formate + 2 H(+). It participates in amino-acid biosynthesis; L-methionine biosynthesis via salvage pathway; L-methionine from S-methyl-5-thio-alpha-D-ribose 1-phosphate: step 5/6. Catalyzes 2 different reactions between oxygen and the acireductone 1,2-dihydroxy-3-keto-5-methylthiopentene (DHK-MTPene) depending upon the metal bound in the active site. Fe-containing acireductone dioxygenase (Fe-ARD) produces formate and 2-keto-4-methylthiobutyrate (KMTB), the alpha-ketoacid precursor of methionine in the methionine recycle pathway. Ni-containing acireductone dioxygenase (Ni-ARD) produces methylthiopropionate, carbon monoxide and formate, and does not lie on the methionine recycle pathway. This Xanthomonas euvesicatoria pv. vesicatoria (strain 85-10) (Xanthomonas campestris pv. vesicatoria) protein is Acireductone dioxygenase.